The chain runs to 144 residues: Mediator of RNA polymerase II transcription subunit 9 (144 aa).

Residues 85-143 (QDCNHKIFELQKRFESAREQIRQLPGIDFNKEEQQQRLELLRNQLKLKQQLIRKYKDTE) adopt a coiled-coil conformation.

The protein belongs to the Mediator complex subunit 9 family. Component of the Mediator complex.

It is found in the nucleus. Component of the Mediator complex, a coactivator involved in the regulated transcription of nearly all RNA polymerase II-dependent genes. Mediator functions as a bridge to convey information from gene-specific regulatory proteins to the basal RNA polymerase II transcription machinery. Mediator is recruited to promoters by direct interactions with regulatory proteins and serves as a scaffold for the assembly of a functional preinitiation complex with RNA polymerase II and the general transcription factors. In Drosophila melanogaster (Fruit fly), this protein is Mediator of RNA polymerase II transcription subunit 9 (MED9).